A 1051-amino-acid polypeptide reads, in one-letter code: Outer capsid protein VP2 (1051 aa).

The protein belongs to the orbivirus VP2 family.

The protein localises to the virion. Its function is as follows. The VP2 protein is one of the two proteins (with VP5) which constitute the virus particle outer capsid. It is the major target of the host immunogenic response. The protein is Outer capsid protein VP2 (Segment-2) of African horse sickness virus (AHSV).